The following is a 353-amino-acid chain: MTIALGQFTKDENDLFDTMDDWLRRDRFVFVGWSGLLLFPCAYFAVGGWFTGTTFVTSWYTHGLASSYLEGCNFLTAAVSTPANSLAHSLLLLWGPEAQGDFTRWCQLGGLWTFVALHGAFGLIGFMLRQFELARSVQLRPYNAIAFSGPIAVFVSVFLIYPLGQSGWFFAPSFGVAAIFRFILFFQGFHNWTLNPFHMMGVAGVLGAALLCAIHGATVENTLFEDGDGANTFRAFNPTQSEETYSMVTANRFWSQIFGVAFSNKRWLHFFMLFVPVTGLWMSALGVVGLALNLRAYDFVSQEIRAAEDPEFETFYTKNILLNEGIRAWMAAQDQPHENLIFPEEVLPRGNAL.

Thr-2 bears the N-acetylthreonine mark. Thr-2 bears the Phosphothreonine mark. Residues 41-61 (CAYFAVGGWFTGTTFVTSWYT) traverse the membrane as a helical segment. His-118 serves as a coordination point for chlorophyll a. Residues 125–141 (GFMLRQFELARSVQLRP) form a helical membrane-spanning segment. Pheophytin a-binding residues include Gln-130 and Asn-143. Residues 153–166 (VFVSVFLIYPLGQS) traverse the membrane as a helical segment. His-198 contributes to the chlorophyll a binding site. A helical transmembrane segment spans residues 208–228 (AALLCAIHGATVENTLFEDGD). A plastoquinone is bound by residues His-215 and Phe-262. His-215 lines the Fe cation pocket. His-269 lines the Fe cation pocket. Residues 279–295 (GLWMSALGVVGLALNLR) traverse the membrane as a helical segment.

It belongs to the reaction center PufL/M/PsbA/D family. As to quaternary structure, PSII is composed of 1 copy each of membrane proteins PsbA, PsbB, PsbC, PsbD, PsbE, PsbF, PsbH, PsbI, PsbJ, PsbK, PsbL, PsbM, PsbT, PsbX, PsbY, PsbZ, Psb30/Ycf12, at least 3 peripheral proteins of the oxygen-evolving complex and a large number of cofactors. It forms dimeric complexes. Requires The D1/D2 heterodimer binds P680, chlorophylls that are the primary electron donor of PSII, and subsequent electron acceptors. It shares a non-heme iron and each subunit binds pheophytin, quinone, additional chlorophylls, carotenoids and lipids. There is also a Cl(-1) ion associated with D1 and D2, which is required for oxygen evolution. The PSII complex binds additional chlorophylls, carotenoids and specific lipids. as cofactor.

Its subcellular location is the plastid. It is found in the chloroplast thylakoid membrane. The enzyme catalyses 2 a plastoquinone + 4 hnu + 2 H2O = 2 a plastoquinol + O2. Functionally, photosystem II (PSII) is a light-driven water:plastoquinone oxidoreductase that uses light energy to abstract electrons from H(2)O, generating O(2) and a proton gradient subsequently used for ATP formation. It consists of a core antenna complex that captures photons, and an electron transfer chain that converts photonic excitation into a charge separation. The D1/D2 (PsbA/PsbD) reaction center heterodimer binds P680, the primary electron donor of PSII as well as several subsequent electron acceptors. D2 is needed for assembly of a stable PSII complex. This is Photosystem II D2 protein from Ipomoea purpurea (Common morning glory).